The sequence spans 702 residues: p-hydroxybenzoic acid--AMP ligase FadD22 (702 aa).

One can recognise a Carrier domain in the interval 538 to 616 (ERHRLVLDAV…GLAQYLEAEL (79 aa)). Serine 576 is modified (O-(pantetheine 4'-phosphoryl)serine).

It belongs to the ATP-dependent AMP-binding enzyme family.

The enzyme catalyses holo-[4-hydroxyphenylalkanoate synthase] + 4-hydroxybenzoate + ATP = 4-hydroxyphenyl-[4-hydroxyphenylalkanoate synthase] + AMP + diphosphate. It functions in the pathway lipid metabolism; fatty acid biosynthesis. Its function is as follows. Catalyzes the adenylation of p-hydroxybenzoic acid (pHBA) to form p-hydroxybenzoic acid-AMP (pHBA-AMP), which is converted directly to p-hydroxybenzoyl-S-FadD22 (pHBA-S-FAdD22) thioester intermediate in a CoA-independent manner by attack of the phosphopantetheine thiol of FadD22. This intermediate primes the biosynthesis of the phenolphthiocerol (PPOL) by presenting the pHBA starter unit for elongation by Pks15/1. PPOL is an important intermediate in the biosynthesis of phenolic glycolipid (mycosid B). The protein is p-hydroxybenzoic acid--AMP ligase FadD22 (fadD22) of Mycobacterium marinum (strain ATCC BAA-535 / M).